The following is a 361-amino-acid chain: Trehalose 6-phosphate phosphatase RA3 (361 aa).

This sequence belongs to the trehalose phosphatase family. It depends on a divalent metal cation as a cofactor. In terms of tissue distribution, expressed in axillary inflorescence meristems.

The catalysed reaction is alpha,alpha-trehalose 6-phosphate + H2O = alpha,alpha-trehalose + phosphate. The protein operates within glycan biosynthesis; trehalose biosynthesis. In terms of biological role, removes the phosphate from trehalose 6-phosphate to produce free trehalose. Is specific for trehalose 6-phosphate. Does not possess activity toward glucose, sucrose or fructose 6-phosphates. Regulates inflorescence branching. Required to establish the correct identity and determinacy of axillary meristems in both male and female inflorescences. May act through a sugar signal that moves into axillary meristems. Acts upstream of RA1. May have a transcriptional regulatory function. The protein is Trehalose 6-phosphate phosphatase RA3 of Zea mays (Maize).